A 466-amino-acid chain; its full sequence is 3-isopropylmalate dehydratase large subunit (466 aa).

[4Fe-4S] cluster-binding residues include C347, C407, and C410.

The protein belongs to the aconitase/IPM isomerase family. LeuC type 1 subfamily. In terms of assembly, heterodimer of LeuC and LeuD. Requires [4Fe-4S] cluster as cofactor.

It carries out the reaction (2R,3S)-3-isopropylmalate = (2S)-2-isopropylmalate. Its pathway is amino-acid biosynthesis; L-leucine biosynthesis; L-leucine from 3-methyl-2-oxobutanoate: step 2/4. In terms of biological role, catalyzes the isomerization between 2-isopropylmalate and 3-isopropylmalate, via the formation of 2-isopropylmaleate. This is 3-isopropylmalate dehydratase large subunit from Shigella flexneri.